Here is a 215-residue protein sequence, read N- to C-terminus: Disulfide-bond oxidoreductase YfcG (215 aa).

The region spanning 1–87 (MIDLYFAPTP…YLAEKTGLFL (87 aa)) is the GST N-terminal domain. Glutathione-binding positions include asparagine 11, glutamine 38, arginine 40, isoleucine 52, 71–72 (ES), and arginine 132. A GST C-terminal domain is found at 90-215 (ETRERAATLQ…AQLGDERSDS (126 aa)).

This sequence belongs to the GST superfamily. Nu-class GSH transferase family. Homodimer.

Its function is as follows. Exhibits a very robust glutathione (GSH)-dependent disulfide-bond reductase activity toward the model substrate, 2-hydroxyethyl disulfide; the actual physiological substrates are not known. Also has a low GSH-dependent hydroperoxidase activity toward cumene hydroperoxide, but does not reduce H(2)O(2), tert-butyl hydroperoxide, benzyl peroxide, or lauroyl peroxide. Exhibits little or no GSH transferase activity with most typical electrophilic substrates, and has no detectable transferase activity using glutathionylspermidine (GspSH) as the nucleophilic substrate. Is involved in defense against oxidative stress, probably via its peroxidase activity. This Escherichia coli (strain K12) protein is Disulfide-bond oxidoreductase YfcG (yfcG).